The primary structure comprises 421 residues: F-box protein At2g17690 (421 aa).

Residues 2–50 form the F-box domain; it reads GDWSKLPEELLGLIALRLYSVIELIRFRSICKSWRSSASGVNKNHSLSS.

In terms of biological role, involved in heat stress response. Contributes to recovery from heat stress. The protein is F-box protein At2g17690 of Arabidopsis thaliana (Mouse-ear cress).